Reading from the N-terminus, the 514-residue chain is MTDKLIIFDTTLRDGEQSPGASMTKEEKIRIAKHLERMKVDVIEAGFAASSNGDFDAIHTIAGLVKDSTICSLARANDKDIQRAADALKPANSARIHTFIATSPLHMEKKLRMTPDQVFEQARLAVRFARKFTDNVEFSPEDGSRSDLDFLCRVLEAVIAEGATTINIADTVGYGVPELYGNLVKTLRERIPNSDKAIFSVHCHNDLGMAVANSLAGVKIGGARQVECTINGLGERAGNTSLEEIVMAVKTRKDYFGLDVGLDTTQIVPTSKLVSQITGFVVQPNKAVVGANAFAHASGIHQDGVLKARDTYEIMRAEDVGWTANKIVLGKLSGRNAFKQRLQELGVSLDSETELNAAFMRFKDLADRKSDIFDEDIIAIVSEESAFAQEQEHYKFVSLSQRSETGEQPQAKVVLALDGKEVTGEARGNGPVDATFNAIEGEVGSGSELLLYSVNAITTGTQAQGEVTVRLSKSGRIVNGVGTDPDIVAASAKAYIAALNKLHSKDDKLNPQRS.

Residues Leu-5–Val-268 enclose the Pyruvate carboxyltransferase domain. 4 residues coordinate Mn(2+): Asp-14, His-202, His-204, and Asn-239. The tract at residues Lys-395–Ser-514 is regulatory domain.

The protein belongs to the alpha-IPM synthase/homocitrate synthase family. LeuA type 1 subfamily. Homodimer. Requires Mn(2+) as cofactor.

It is found in the cytoplasm. It catalyses the reaction 3-methyl-2-oxobutanoate + acetyl-CoA + H2O = (2S)-2-isopropylmalate + CoA + H(+). The protein operates within amino-acid biosynthesis; L-leucine biosynthesis; L-leucine from 3-methyl-2-oxobutanoate: step 1/4. Its function is as follows. Catalyzes the condensation of the acetyl group of acetyl-CoA with 3-methyl-2-oxobutanoate (2-ketoisovalerate) to form 3-carboxy-3-hydroxy-4-methylpentanoate (2-isopropylmalate). This is 2-isopropylmalate synthase from Burkholderia ambifaria (strain ATCC BAA-244 / DSM 16087 / CCUG 44356 / LMG 19182 / AMMD) (Burkholderia cepacia (strain AMMD)).